We begin with the raw amino-acid sequence, 327 residues long: MAGETVLVVGGAGYIGSHTCLDLANKGYRPVVFDNFSNGHREFVRWGPAEEGDIRDRARLDEVLAKHKPAAILHFAALIEVGESVKDPVSFYENNVIGTLTLLSAAQAAGINAFVFSSTCATYGLPQSVPLDETHRQVPINPYGRTKYIVEQALADYDQYGSLRSVVLRYFNAAGADFEGRIGEWHQPETHAIPLAIDAALGRRQGFKVFGSDYETRDGTCVRDYIHVLDLADAHVRAVEYLLKGGDSVALNLGTGTGTTVKELLGAIEEVSNRPFPVEYIGRREGDSHTLVANNDKARDVLGWVPQYDLSEIIRSAWDWHAKSNQH.

Position 119 (threonine 119) interacts with substrate. Residue tyrosine 143 is the Proton acceptor of the active site.

The protein belongs to the NAD(P)-dependent epimerase/dehydratase family. It depends on NAD(+) as a cofactor.

The enzyme catalyses UDP-alpha-D-glucose = UDP-alpha-D-galactose. It participates in carbohydrate metabolism; galactose metabolism. The protein operates within glycan metabolism; exopolysaccharide biosynthesis. In Rhizobium leguminosarum bv. trifolii, this protein is UDP-glucose 4-epimerase (exoB).